The following is a 338-amino-acid chain: Ribosomal RNA large subunit methyltransferase F (338 aa).

Residues 1–21 (MTQKKNKPTQKKKGLHPRNPH) form a disordered region.

It belongs to the methyltransferase superfamily. METTL16/RlmF family.

It is found in the cytoplasm. It carries out the reaction adenosine(1618) in 23S rRNA + S-adenosyl-L-methionine = N(6)-methyladenosine(1618) in 23S rRNA + S-adenosyl-L-homocysteine + H(+). In terms of biological role, specifically methylates the adenine in position 1618 of 23S rRNA. This Photobacterium profundum (strain SS9) protein is Ribosomal RNA large subunit methyltransferase F.